The primary structure comprises 392 residues: Formate-dependent phosphoribosylglycinamide formyltransferase (392 aa).

Residues 22 to 23 (EL) and glutamate 82 each bind N(1)-(5-phospho-beta-D-ribosyl)glycinamide. ATP is bound by residues arginine 114, lysine 155, 160–165 (SSGKGQ), 195–198 (EGEV), and glutamate 203. Residues 119–308 (RLAAETLALP…EFALHVRAFL (190 aa)) form the ATP-grasp domain. Residues glutamate 267 and glutamate 279 each contribute to the Mg(2+) site. Residues aspartate 286, lysine 355, and 362-363 (RR) each bind N(1)-(5-phospho-beta-D-ribosyl)glycinamide.

It belongs to the PurK/PurT family. In terms of assembly, homodimer.

The enzyme catalyses N(1)-(5-phospho-beta-D-ribosyl)glycinamide + formate + ATP = N(2)-formyl-N(1)-(5-phospho-beta-D-ribosyl)glycinamide + ADP + phosphate + H(+). It participates in purine metabolism; IMP biosynthesis via de novo pathway; N(2)-formyl-N(1)-(5-phospho-D-ribosyl)glycinamide from N(1)-(5-phospho-D-ribosyl)glycinamide (formate route): step 1/1. Functionally, involved in the de novo purine biosynthesis. Catalyzes the transfer of formate to 5-phospho-ribosyl-glycinamide (GAR), producing 5-phospho-ribosyl-N-formylglycinamide (FGAR). Formate is provided by PurU via hydrolysis of 10-formyl-tetrahydrofolate. The chain is Formate-dependent phosphoribosylglycinamide formyltransferase from Edwardsiella ictaluri (strain 93-146).